We begin with the raw amino-acid sequence, 118 residues long: Ribonuclease P protein component (118 aa).

The protein belongs to the RnpA family. In terms of assembly, consists of a catalytic RNA component (M1 or rnpB) and a protein subunit.

The enzyme catalyses Endonucleolytic cleavage of RNA, removing 5'-extranucleotides from tRNA precursor.. RNaseP catalyzes the removal of the 5'-leader sequence from pre-tRNA to produce the mature 5'-terminus. It can also cleave other RNA substrates such as 4.5S RNA. The protein component plays an auxiliary but essential role in vivo by binding to the 5'-leader sequence and broadening the substrate specificity of the ribozyme. In Mycobacterium sp. (strain KMS), this protein is Ribonuclease P protein component.